A 694-amino-acid polypeptide reads, in one-letter code: Methionine--tRNA ligase (694 aa).

Positions 12 to 22 (PYANGPLHLGH) match the 'HIGH' region motif. Zn(2+)-binding residues include cysteine 143, cysteine 146, cysteine 156, and cysteine 159. The 'KMSKS' region motif lies at 330 to 334 (KMSKS). Residue lysine 333 participates in ATP binding. Over residues 550–573 (MAAPAAPATTTKPAPSKADAKPAA) the composition is skewed to low complexity. The tract at residues 550 to 582 (MAAPAAPATTTKPAPSKADAKPAAVANPESQTT) is disordered. Residues 591-694 (DFAKLDLRIG…SGAQPGMPVR (104 aa)) form the tRNA-binding domain.

This sequence belongs to the class-I aminoacyl-tRNA synthetase family. MetG type 1 subfamily. In terms of assembly, homodimer. Zn(2+) serves as cofactor.

Its subcellular location is the cytoplasm. The enzyme catalyses tRNA(Met) + L-methionine + ATP = L-methionyl-tRNA(Met) + AMP + diphosphate. In terms of biological role, is required not only for elongation of protein synthesis but also for the initiation of all mRNA translation through initiator tRNA(fMet) aminoacylation. This Xanthomonas euvesicatoria pv. vesicatoria (strain 85-10) (Xanthomonas campestris pv. vesicatoria) protein is Methionine--tRNA ligase.